The chain runs to 600 residues: Keratin, type II cuticular Hb4 (600 aa).

The head stretch occupies residues 1 to 165 (MSCRSYRVSS…PNAQRVKKDE (165 aa)). Residues 165–476 (EKEQIKTLNN…RLLEGEESRL (312 aa)) enclose the IF rod domain. Residues 166–200 (KEQIKTLNNKFASFIDKVRFLEQQNKLLETKWSFL) are coil 1A. A linker 1 region spans residues 201–210 (QEQKCIRSNL). The coil 1B stretch occupies residues 211 to 311 (EPLFESYITN…YMEEIQLLQS (101 aa)). A linker 12 region spans residues 312–328 (HISETSVIVKMDNSRDL). Positions 329 to 472 (NLDGIIAEVK…ATYRRLLEGE (144 aa)) are coil 2. The tail stretch occupies residues 473 to 600 (ESRLCEGVGP…STTTSCRTKY (128 aa)).

This sequence belongs to the intermediate filament family. As to quaternary structure, heterotetramer of two type I and two type II keratins. Expressed in the hair follicles.

The polypeptide is Keratin, type II cuticular Hb4 (KRT84) (Homo sapiens (Human)).